The following is a 285-amino-acid chain: Probable endonuclease 4 (285 aa).

Residues histidine 69, histidine 109, glutamate 145, aspartate 179, histidine 182, histidine 216, aspartate 229, histidine 231, and glutamate 261 each coordinate Zn(2+).

The protein belongs to the AP endonuclease 2 family. It depends on Zn(2+) as a cofactor.

It catalyses the reaction Endonucleolytic cleavage to 5'-phosphooligonucleotide end-products.. Functionally, endonuclease IV plays a role in DNA repair. It cleaves phosphodiester bonds at apurinic or apyrimidinic (AP) sites, generating a 3'-hydroxyl group and a 5'-terminal sugar phosphate. This chain is Probable endonuclease 4, found in Escherichia coli (strain SMS-3-5 / SECEC).